Consider the following 457-residue polypeptide: tRNA modification GTPase MnmE (457 aa).

(6S)-5-formyl-5,6,7,8-tetrahydrofolate-binding residues include arginine 23, glutamate 85, and arginine 124. The 157-residue stretch at 220–376 (GALVVLAGQV…LVTAIRAAVL (157 aa)) folds into the TrmE-type G domain. Asparagine 230 serves as a coordination point for K(+). GTP contacts are provided by residues 230–235 (NAGKSS), 249–255 (TDLPGTT), and 274–277 (DTAG). Serine 234 serves as a coordination point for Mg(2+). K(+) is bound by residues threonine 249, leucine 251, and threonine 254. Mg(2+) is bound at residue threonine 255. Lysine 457 lines the (6S)-5-formyl-5,6,7,8-tetrahydrofolate pocket.

It belongs to the TRAFAC class TrmE-Era-EngA-EngB-Septin-like GTPase superfamily. TrmE GTPase family. Homodimer. Heterotetramer of two MnmE and two MnmG subunits. The cofactor is K(+).

It is found in the cytoplasm. Exhibits a very high intrinsic GTPase hydrolysis rate. Involved in the addition of a carboxymethylaminomethyl (cmnm) group at the wobble position (U34) of certain tRNAs, forming tRNA-cmnm(5)s(2)U34. This is tRNA modification GTPase MnmE from Nitratidesulfovibrio vulgaris (strain ATCC 29579 / DSM 644 / CCUG 34227 / NCIMB 8303 / VKM B-1760 / Hildenborough) (Desulfovibrio vulgaris).